The primary structure comprises 1133 residues: Envelopment polyprotein (1133 aa).

The N-terminal stretch at 1–16 (MWSLLLLAALVGQGFA) is a signal peptide. Over 17–484 (LKNVFDMRIQ…PGFHGWATAA (468 aa)) the chain is Lumenal. Disulfide bonds link C61-C155, C107-C126, C131-C136, C173-C183, C208-C245, C232-C349, C374-C433, C378-C387, C403-C422, and C450-C473. An N-linked (GlcNAc...) asparagine; by host glycan is attached at N132. N233 and N345 each carry an N-linked (GlcNAc...) asparagine; by host glycan. N397 is a glycosylation site (N-linked (GlcNAc...) asparagine; by host). A helical membrane pass occupies residues 485 to 504 (LLITFCFGWVLIPACTLAIL). The Cytoplasmic segment spans residues 505 to 626 (LVLKFFANIL…NLFRYKSRCY (122 aa)). The segment at 514 to 531 (LHTSNQENRFKAILRKIK) is binding to the ribonucleoprotein. 2 CCHC-type zinc fingers span residues 543–563 (CEICKYECETLKELKAHNLSC) and 568–589 (CPYCFTHCEPTETAIQAHYKVC). 3 binding to the ribonucleoprotein regions span residues 586-603 (YKVCQATHRFREDLKKTV), 590-601 (QATHRFREDLKK), and 609-623 (GPGCYRTLNLFRYKS). The region spanning 609-632 (GPGCYRTLNLFRYKSRCYILTMWT) is the ITAM domain. The YxxL signature appears at 613–616 (YRTL). Residues 627–647 (ILTMWTLLLIIESILWAASAA) form a helical membrane-spanning segment. The Lumenal portion of the chain corresponds to 648–1105 (EIPLVPLWTD…VMGIINGNWV (458 aa)). Disulfide bonds link C733-C768, C737-C775, C749-C883, C763-C894, C778-C902, C804-C813, C821-C830, and C861-C865. The interval 755-775 (YEYENSWACNPPDCPGVGTGC) is fusion loop. N926 is a glycosylation site (N-linked (GlcNAc...) asparagine; by host). Disulfide bonds link C968-C998, C991-C1043, C1008-C1013, C1044-C1049, and C1083-C1087. A helical membrane pass occupies residues 1106-1125 (VLIVLCVLLLFSLILLSILC). The binding to the ribonucleoprotein stretch occupies residues 1120–1133 (LLSILCPVRKHKKS). The Cytoplasmic segment spans residues 1126–1133 (PVRKHKKS).

It belongs to the hantavirus envelope glycoprotein family. As to quaternary structure, homodimer. Homotetramer; forms heterotetrameric Gn-Gc spikes in the pre-fusion conformation. Interacts (via C-terminus) with the nucleoprotein. Interacts with host TUFM; this interaction contributes to the virus-induced degradation of mitochondria by autophagy, which leads to degradation of host MAVS and inhibition of type I interferon (IFN) responses. Interacts with host MAP1LC3B; this interaction contributes to the virus-induced degradation of mitochondria by autophagy, which leads to degradation of host MAVS and inhibition of type I interferon (IFN) responses. Homodimer. Homotetramer; forms heterotetrameric Gn-Gc spikes in the pre-fusion conformation. Homotrimer; forms homotrimer in the post-fusion conformation at acidic pH. Interacts (via C-terminus) with the nucleoprotein. Envelope polyprotein precursor is quickly cleaved in vivo just after synthesis, presumably by host signal peptidase.

It localises to the virion membrane. The protein resides in the host cell surface. It is found in the host Golgi apparatus membrane. Its subcellular location is the host endoplasmic reticulum membrane. The protein localises to the host mitochondrion. Functionally, forms homotetramers with glycoprotein C at the surface of the virion. Attaches the virion to host cell receptors including integrin ITGAV/ITGB3. This attachment induces virion internalization predominantly through clathrin-dependent endocytosis. Mediates the assembly and budding of infectious virus particles through its interaction with the nucleocapsid protein and the viral genome. May dysregulate normal immune and endothelial cell responses through an ITAM motif. Translocates to mitochondria, binds to host TUFM and recruits MAP1LC3B. These interactions induce mitochondrial autophagy and therefore destruction of host MAVS leading to inhibition of type I interferon (IFN) responses. Concomitant breakdown of glycoprotein N is apparently prevented by the nucleoprotein that may inhibit Gn-stimulated autophagosome-lysosome fusion. Interacts with the viral genomic RNA. Forms homotetramers with glycoprotein N at the surface of the virion. Attaches the virion to host cell receptors including integrin ITGAV/ITGB3. This attachment induces virion internalization predominantly through clathrin-dependent endocytosis. Class II fusion protein that promotes fusion of viral membrane with host endosomal membrane after endocytosis of the virion. The chain is Envelopment polyprotein (GP) from Homo sapiens (Human).